The sequence spans 663 residues: DNA ligase (663 aa).

Residues aspartate 33 to aspartate 37, serine 82 to isoleucine 83, and glutamate 112 contribute to the NAD(+) site. The active-site N6-AMP-lysine intermediate is lysine 114. 4 residues coordinate NAD(+): arginine 135, glutamate 171, lysine 285, and lysine 309. The Zn(2+) site is built by cysteine 403, cysteine 406, cysteine 419, and cysteine 424. Residues aspartate 581–serine 663 enclose the BRCT domain.

This sequence belongs to the NAD-dependent DNA ligase family. LigA subfamily. Mg(2+) is required as a cofactor. The cofactor is Mn(2+).

It carries out the reaction NAD(+) + (deoxyribonucleotide)n-3'-hydroxyl + 5'-phospho-(deoxyribonucleotide)m = (deoxyribonucleotide)n+m + AMP + beta-nicotinamide D-nucleotide.. Functionally, DNA ligase that catalyzes the formation of phosphodiester linkages between 5'-phosphoryl and 3'-hydroxyl groups in double-stranded DNA using NAD as a coenzyme and as the energy source for the reaction. It is essential for DNA replication and repair of damaged DNA. The chain is DNA ligase from Chlamydia trachomatis serovar D (strain ATCC VR-885 / DSM 19411 / UW-3/Cx).